Consider the following 360-residue polypeptide: DNA replication and repair protein RecF (360 aa).

30–37 (GDNAQGKT) is an ATP binding site.

It belongs to the RecF family.

The protein resides in the cytoplasm. Functionally, the RecF protein is involved in DNA metabolism; it is required for DNA replication and normal SOS inducibility. RecF binds preferentially to single-stranded, linear DNA. It also seems to bind ATP. This chain is DNA replication and repair protein RecF, found in Lachnoclostridium phytofermentans (strain ATCC 700394 / DSM 18823 / ISDg) (Clostridium phytofermentans).